The primary structure comprises 240 residues: MSSMSMSSSSAPAFPPDHFSSTDQLCYVHCSFCDTVLAVSVPPSSLFKTVTVRCGHCSNLLSVTVSMRALLLPSVSNLGHSFLPPPPPPPPPNLLEEMRSGGQNINMNMMMSHHASAHHPNEHLVMATRNGRSVDHLQEMPRPPPANRPPEKRQRVPSAYNRFIKEEIQRIKAGNPDISHREAFSAAAKNWAHFPHIHFGLMADHPPTKKANVRQQEGEDGMMGREGFYGSAANVGVAHN.

The C4-type zinc-finger motif lies at 30–57; that stretch reads CSFCDTVLAVSVPPSSLFKTVTVRCGHC. The interval 135 to 156 is disordered; it reads DHLQEMPRPPPANRPPEKRQRV.

Belongs to the YABBY family. In terms of assembly, interacts with SPL/NZZ. Interacts with SPEAR2. Binds to LUG and LUH; these complexes promote adaxial cell identity in leaves as well as embryonic shoot apical meristem (SAM) initiation and postembryonic SAM maintenance. In terms of tissue distribution, expressed in abaxial regions of lateral aerial organ primordia leading to cotyledons, leaves, flower meristems, sepals, petals, stamen and carpels, but not in roots.

It localises to the nucleus. Functionally, involved in the abaxial cell fate determination during embryogenesis and organogenesis. Regulates the initiation of embryonic shoot apical meristem (SAM) development. Contributes to the repression of KNOX genes (STM, KNAT1/BP and KNAT2) to avoid ectopic meristems. Binds DNA without sequence specificity. The sequence is that of Axial regulator YABBY 3 (YAB3) from Arabidopsis thaliana (Mouse-ear cress).